Reading from the N-terminus, the 955-residue chain is uncharacterized protein (955 aa).

A signal peptide spans methionine 1–alanine 24. Residues serine 127–arginine 146 are disordered. 6 helical membrane-spanning segments follow: residues isoleucine 597–alanine 617, leucine 707–isoleucine 727, alanine 739–phenylalanine 759, valine 781–valine 801, phenylalanine 818–phenylalanine 838, and isoleucine 857–methionine 877. Residues leucine 905–lysine 955 are disordered. Residues methionine 910–lysine 955 are compositionally biased toward basic and acidic residues.

This sequence belongs to the TrbL/VirB6 family.

Its subcellular location is the cell membrane. This is an uncharacterized protein from Rickettsia bellii (strain RML369-C).